The chain runs to 291 residues: Protein/nucleic acid deglycase HchA (291 aa).

Residues 1-18 are compositionally biased toward basic and acidic residues; the sequence is MSNERDTSRTPTPDHAEH. Residues 1-24 form a disordered region; that stretch reads MSNERDTSRTPTPDHAEHNAFFPS. Cys188 functions as the Nucleophile in the catalytic mechanism.

It belongs to the peptidase C56 family. HchA subfamily.

The protein resides in the cytoplasm. The catalysed reaction is N(omega)-(1-hydroxy-2-oxopropyl)-L-arginyl-[protein] + H2O = lactate + L-arginyl-[protein] + H(+). It catalyses the reaction N(6)-(1-hydroxy-2-oxopropyl)-L-lysyl-[protein] + H2O = lactate + L-lysyl-[protein] + H(+). It carries out the reaction S-(1-hydroxy-2-oxopropyl)-L-cysteinyl-[protein] + H2O = lactate + L-cysteinyl-[protein] + H(+). The enzyme catalyses N(omega)-(1-hydroxy-2-oxoethyl)-L-arginyl-[protein] + H2O = L-arginyl-[protein] + glycolate + H(+). The catalysed reaction is N(6)-(1-hydroxy-2-oxoethyl)-L-lysyl-[protein] + H2O = glycolate + L-lysyl-[protein] + H(+). It catalyses the reaction S-(1-hydroxy-2-oxoethyl)-L-cysteinyl-[protein] + H2O = glycolate + L-cysteinyl-[protein] + H(+). It carries out the reaction N(2)-(1-hydroxy-2-oxopropyl)-dGTP + H2O = lactate + dGTP + H(+). The enzyme catalyses N(2)-(1-hydroxy-2-oxopropyl)-GTP + H2O = lactate + GTP + H(+). The catalysed reaction is N(2)-(1-hydroxy-2-oxopropyl)-GDP + H2O = lactate + GDP + H(+). It catalyses the reaction N(2)-(1-hydroxy-2-oxopropyl)-GMP + H2O = lactate + GMP + H(+). It carries out the reaction N(2)-(1-hydroxy-2-oxoethyl)-dGTP + H2O = dGTP + glycolate + H(+). The enzyme catalyses N(2)-(1-hydroxy-2-oxoethyl)-GTP + H2O = glycolate + GTP + H(+). The catalysed reaction is N(2)-(1-hydroxy-2-oxoethyl)-GDP + H2O = glycolate + GDP + H(+). It catalyses the reaction N(2)-(1-hydroxy-2-oxoethyl)-GMP + H2O = glycolate + GMP + H(+). It carries out the reaction an N(2)-(1-hydroxy-2-oxopropyl)-guanosine in RNA + H2O = a guanosine in RNA + lactate + H(+). The enzyme catalyses an N(2)-(1-hydroxy-2-oxopropyl)-2'-deoxyguanosine in DNA + H2O = a 2'-deoxyguanosine in DNA + lactate + H(+). The catalysed reaction is an N(2)-(1-hydroxy-2-oxoethyl)-guanosine in RNA + H2O = a guanosine in RNA + glycolate + H(+). It catalyses the reaction an N(2)-(1-hydroxy-2-oxoethyl)-2'-deoxyguanosine in DNA + H2O = a 2'-deoxyguanosine in DNA + glycolate + H(+). Functionally, protein and nucleotide deglycase that catalyzes the deglycation of the Maillard adducts formed between amino groups of proteins or nucleotides and reactive carbonyl groups of glyoxals. Thus, functions as a protein deglycase that repairs methylglyoxal- and glyoxal-glycated proteins, and releases repaired proteins and lactate or glycolate, respectively. Deglycates cysteine, arginine and lysine residues in proteins, and thus reactivates these proteins by reversing glycation by glyoxals. Acts on early glycation intermediates (hemithioacetals and aminocarbinols), preventing the formation of Schiff bases and advanced glycation endproducts (AGE). Also functions as a nucleotide deglycase able to repair glycated guanine in the free nucleotide pool (GTP, GDP, GMP, dGTP) and in DNA and RNA. Is thus involved in a major nucleotide repair system named guanine glycation repair (GG repair), dedicated to reversing methylglyoxal and glyoxal damage via nucleotide sanitization and direct nucleic acid repair. Plays an important role in protecting cells from carbonyl stress. This chain is Protein/nucleic acid deglycase HchA, found in Pseudomonas aeruginosa (strain UCBPP-PA14).